The sequence spans 1220 residues: MIDVNKFESMQIGLASPDKIRSWSYGEVKKPETINYRTLKPERDGLFDERIFGPTKDWECACGKYKRIRYKGIVCDRCGVEVTRSKVRRERMGHIELAAPVTHIWYFKGIPSRMGLVLDMSPRSLEEIIYFASYVVIDPGDTPMEKKQLLTEREYREKREEYGQTFNAKMGAEAIKELLQDVELDKEVAELKEDLKSAQGQKRTRAIRRLDILDAFKESGNDPAWMVMDTIPVIPPDLRPMVQLEGGRFATSDLNDLYRRVINRNNRLKRLLDLNAPSIIVQNEKRMLQEAVDALIDNGRRGRPVTGPGNRPLKSLSHMLKGKQGRFRQNLLGKRVDYSGRSVIDVGPWLKFYQCGVPREMALELFKPFVMRELVKRDMASNIKNARRKIDRQDDDVWDVLEDVIKERPVLLNRAPTLHRLGIQAFEPVLVDGKSIRLHPLVCEAYNADFDGDQMAIHVPLSDEAMAEARMLMLAAHHILAPKDGKPIVTPSQDVVLGNYYLTMEQKGREGEGMIFKDTNEVLMALQNGYVHLHSRIGIATNSFTDKPFTDDQKQKIMVTSVGKAIFNEIMPKDFPYLNEPTQDNIVNGVPDKYFIDKGEDINDYLEDAPLIDPFKKGFLSDIIAQVFKVYKVQRTSDLLDDMKTLGYTQSTNSGLTVGIADITNLKEKPEIVEAAHKKVATVSKQFRRGLITDEERHDRVIQTWNDAKDDIQQKLVDSFDPNNPISMMSDSGARGNISNFTQLAGMRGLMAAPNGGMMEVPVISNFREGLSVMEMFMSTHGARKGMTDTALKTADSGYLTRRLVDVAQDVIVREEDCGTDRGLVVSAIREGNEMIEPLYDRLVGRFTMKDVLDPKSGEVLVKRNTLMDEDTAQMIVDAGVESVTIRSVFTCNTKHGVCQKCYGRNMATGEQVEVGEAVGTVAAQSIGEPGTQLTMRNFHTGGVAGGEDITQGLPRVQEIFEARNPKGEAVITEVTGEITAIDENPAEHTREITVKGETDTRTYSVPYASSVAVAEGDHINRGERLTGGSIDPKQLIKVRDVMATENYLLSEVQKVYRMQGVDIGDKHVEVMVRQMLRKIRVMDPGDTNILPGTLLDIADFKEKNTQAIISGGIPATGRPVLLGITKASLETNSFLSAASFQETTRVLTDASIRGKNDPLIGLKENVIIGKIIPAGTGMATYRHEEPKSVGTVSDSVYSISDIEKQMKAKDGQQGDTDKK.

Zn(2+)-binding residues include C60, C62, C75, and C78. Positions 449, 451, and 453 each coordinate Mg(2+). Positions 818, 892, 899, and 902 each coordinate Zn(2+).

This sequence belongs to the RNA polymerase beta' chain family. As to quaternary structure, the RNAP catalytic core consists of 2 alpha, 1 beta, 1 beta' and 1 omega subunit. When a sigma factor is associated with the core the holoenzyme is formed, which can initiate transcription. Mg(2+) serves as cofactor. The cofactor is Zn(2+).

The enzyme catalyses RNA(n) + a ribonucleoside 5'-triphosphate = RNA(n+1) + diphosphate. Its function is as follows. DNA-dependent RNA polymerase catalyzes the transcription of DNA into RNA using the four ribonucleoside triphosphates as substrates. The protein is DNA-directed RNA polymerase subunit beta' of Lacticaseibacillus casei (strain BL23) (Lactobacillus casei).